The sequence spans 706 residues: Glutamine-dependent NAD(+) synthetase (706 aa).

Positions 5 to 275 (VTVATCALNQ…VEVLTATLDL (271 aa)) constitute a CN hydrolase domain. E45 (proton acceptor; for glutaminase activity) is an active-site residue. Catalysis depends on K114, which acts as the For glutaminase activity. Residue C175 is the Nucleophile; for glutaminase activity of the active site. The tract at residues 325–706 (YHSPEEEISL…AEPQSLDGVD (382 aa)) is ligase. 355–362 (PLSGGVDS) lines the ATP pocket. Residue S357 is part of the active site.

This sequence in the C-terminal section; belongs to the NAD synthetase family. As to quaternary structure, homohexamer.

It carries out the reaction deamido-NAD(+) + L-glutamine + ATP + H2O = L-glutamate + AMP + diphosphate + NAD(+) + H(+). It functions in the pathway cofactor biosynthesis; NAD(+) biosynthesis; NAD(+) from deamido-NAD(+) (L-Gln route): step 1/1. Functionally, catalyzes the final step of the nicotinamide adenine dinucleotide (NAD) de novo synthesis pathway, the ATP-dependent amidation of deamido-NAD using L-glutamine as a nitrogen source. The sequence is that of Glutamine-dependent NAD(+) synthetase (NADSYN1) from Homo sapiens (Human).